The following is a 165-amino-acid chain: Regulator of ribonuclease activity A (165 aa).

This sequence belongs to the RraA family. Homotrimer. Binds to both RNA-binding sites in the C-terminal region of Rne and to RhlB.

It is found in the cytoplasm. Globally modulates RNA abundance by binding to RNase E (Rne) and regulating its endonucleolytic activity. Can modulate Rne action in a substrate-dependent manner by altering the composition of the degradosome. Modulates RNA-binding and helicase activities of the degradosome. The sequence is that of Regulator of ribonuclease activity A from Haemophilus ducreyi (strain 35000HP / ATCC 700724).